A 723-amino-acid polypeptide reads, in one-letter code: Fatty acid oxidation complex subunit alpha (723 aa).

The tract at residues Met1–Glu189 is enoyl-CoA hydratase/isomerase. Position 296 (Asp296) interacts with substrate. The 3-hydroxyacyl-CoA dehydrogenase stretch occupies residues Ser311 to Ile723. NAD(+)-binding positions include Met325, Asp344, Val401–Glu403, Lys408, and Ser430. The active-site For 3-hydroxyacyl-CoA dehydrogenase activity is the His451. Asn454 lines the NAD(+) pocket. 2 residues coordinate substrate: Asn501 and Tyr661.

The protein in the N-terminal section; belongs to the enoyl-CoA hydratase/isomerase family. This sequence in the C-terminal section; belongs to the 3-hydroxyacyl-CoA dehydrogenase family. In terms of assembly, heterotetramer of two alpha chains (FadB) and two beta chains (FadA).

It carries out the reaction a (3S)-3-hydroxyacyl-CoA + NAD(+) = a 3-oxoacyl-CoA + NADH + H(+). The enzyme catalyses a (3S)-3-hydroxyacyl-CoA = a (2E)-enoyl-CoA + H2O. The catalysed reaction is a 4-saturated-(3S)-3-hydroxyacyl-CoA = a (3E)-enoyl-CoA + H2O. It catalyses the reaction (3S)-3-hydroxybutanoyl-CoA = (3R)-3-hydroxybutanoyl-CoA. It carries out the reaction a (3Z)-enoyl-CoA = a 4-saturated (2E)-enoyl-CoA. The enzyme catalyses a (3E)-enoyl-CoA = a 4-saturated (2E)-enoyl-CoA. It functions in the pathway lipid metabolism; fatty acid beta-oxidation. Functionally, involved in the aerobic and anaerobic degradation of long-chain fatty acids via beta-oxidation cycle. Catalyzes the formation of 3-oxoacyl-CoA from enoyl-CoA via L-3-hydroxyacyl-CoA. It can also use D-3-hydroxyacyl-CoA and cis-3-enoyl-CoA as substrate. In Vibrio parahaemolyticus serotype O3:K6 (strain RIMD 2210633), this protein is Fatty acid oxidation complex subunit alpha.